A 176-amino-acid polypeptide reads, in one-letter code: Tubulin polymerization-promoting protein family member 3 (176 aa).

Position 2 is an N-acetylalanine (alanine 2). The disordered stretch occupies residues 132-152 (TGSHKERFDESGKGKGIAGRQ). Over residues 134–144 (SHKERFDESGK) the composition is skewed to basic and acidic residues.

Belongs to the TPPP family. As to expression, expressed in endometrium during the mid-secretory phase (LH + 7) (at protein level).

It localises to the cytoplasm. It is found in the cytoskeleton. Functionally, regulator of microtubule dynamic that has microtubule bundling activity. Required for embryo implantation; possibly by regulating beta-catenin. Also required for decidualization via regulation of beta-catenin. The polypeptide is Tubulin polymerization-promoting protein family member 3 (Homo sapiens (Human)).